Consider the following 275-residue polypeptide: MQNHVISLASAAERRAHIADTFGRHGIPFQFFDALMPSERLEQAMAELVPGLSAHPYLSGVEKACFMSHAVLWKQALDEGLPYITVFEDDVLLGEGAEKFLAEDAWLQERFDPDTAFIVRLETMFMHVLTSPSGVADYCGRAFPLLESEHWGTAGYIISRKAMRFFLDRFAALPPEGLHPVDLMMFSDFFDREGMPVCQLNPALCAQELHYAKFHDQNSALGSLIEHDRLLNRKQQRRDSPANTFKHRLIRALTKISREREKRRQRREQFIVPFQ.

It belongs to the glycosyltransferase 25 family.

Its pathway is glycan metabolism; lacto-N-neotetraose biosynthesis. It participates in bacterial outer membrane biogenesis; lipooligosaccharide biosynthesis. Functionally, adds the second galactose to the lacto-N-tetraose chain in lipooligosaccharide (LOS). This Neisseria meningitidis serogroup B (strain ATCC BAA-335 / MC58) protein is Lacto-N-neotetraose biosynthesis glycosyltransferase LgtB (lgtB).